A 605-amino-acid chain; its full sequence is Capsid scaffolding protein (605 aa).

Residues His-48, Ser-116, and His-139 each act as charge relay system in the active site. Positions 235–274 (ASDAPDLQKPDKALQSPPPASTDPATMLSGNAGEGATACG) are disordered. The segment at 281–300 (QDLISVPRNTFMTLLQTNLD) is interaction with pAP. 2 disordered regions span residues 403-432 (DYVPAPSRSNKRKRDPEEDEEGGGLFPGED) and 489-588 (PHQS…KSVS). Positions 410–416 (RSNKRKR) match the Nuclear localization signal motif. The segment covering 568-579 (ASASGVAQSKEP) has biased composition (polar residues). The interaction with major capsid protein stretch occupies residues 585–605 (KSVSAHLKSIFCEELLNKRVA).

It belongs to the herpesviridae capsid scaffolding protein family. Homomultimer. Interacts with major capsid protein. In terms of assembly, exists in a monomer-dimer equilibrium with the dimer being the active species. Post-translationally, capsid scaffolding protein is cleaved by assemblin after formation of the spherical procapsid. As a result, the capsid obtains its mature, icosahedral shape. Cleavages occur at two or more sites: release (R-site) and maturation (M-site).

It localises to the host cytoplasm. It is found in the host nucleus. The catalysed reaction is Cleaves -Ala-|-Ser- and -Ala-|-Ala- bonds in the scaffold protein.. Acts as a scaffold protein by binding major capsid protein in the cytoplasm, inducing the nuclear localization of both proteins. Multimerizes in the nucleus such as major capsid protein forms the icosahedral T=16 capsid. Autocatalytic cleavage releases the assembly protein, and subsequently abolishes interaction with major capsid protein. Cleavages products are evicted from the capsid before or during DNA packaging. Functionally, protease that plays an essential role in virion assembly within the nucleus. Catalyzes the cleavage of the assembly protein after formation of the spherical procapsid. By that cleavage, the capsid matures and gains its icosahedral shape. The cleavage sites seem to include -Ala-Ser-, -Ala-Ala-, as well as Ala-Thr bonds. Assemblin and cleavages products are evicted from the capsid before or during DNA packaging. In terms of biological role, plays a major role in capsid assembly. Acts as a scaffold protein by binding major capsid protein. Multimerizes in the nucleus such as major capsid protein forms the icosahedral T=16 capsid. Cleaved by assemblin after capsid completion. The cleavages products are evicted from the capsid before or during DNA packaging. This Homo sapiens (Human) protein is Capsid scaffolding protein.